The primary structure comprises 237 residues: Thiamine-phosphate synthase (237 aa).

Residues 41–45 (QLRDK) and N73 contribute to the 4-amino-2-methyl-5-(diphosphooxymethyl)pyrimidine site. Mg(2+) is bound by residues D74 and D93. S112 lines the 4-amino-2-methyl-5-(diphosphooxymethyl)pyrimidine pocket. 143–145 (TPT) contacts 2-[(2R,5Z)-2-carboxy-4-methylthiazol-5(2H)-ylidene]ethyl phosphate. Position 146 (K146) interacts with 4-amino-2-methyl-5-(diphosphooxymethyl)pyrimidine. Residue G192 participates in 2-[(2R,5Z)-2-carboxy-4-methylthiazol-5(2H)-ylidene]ethyl phosphate binding.

This sequence belongs to the thiamine-phosphate synthase family. Requires Mg(2+) as cofactor.

The enzyme catalyses 2-[(2R,5Z)-2-carboxy-4-methylthiazol-5(2H)-ylidene]ethyl phosphate + 4-amino-2-methyl-5-(diphosphooxymethyl)pyrimidine + 2 H(+) = thiamine phosphate + CO2 + diphosphate. It catalyses the reaction 2-(2-carboxy-4-methylthiazol-5-yl)ethyl phosphate + 4-amino-2-methyl-5-(diphosphooxymethyl)pyrimidine + 2 H(+) = thiamine phosphate + CO2 + diphosphate. It carries out the reaction 4-methyl-5-(2-phosphooxyethyl)-thiazole + 4-amino-2-methyl-5-(diphosphooxymethyl)pyrimidine + H(+) = thiamine phosphate + diphosphate. The protein operates within cofactor biosynthesis; thiamine diphosphate biosynthesis; thiamine phosphate from 4-amino-2-methyl-5-diphosphomethylpyrimidine and 4-methyl-5-(2-phosphoethyl)-thiazole: step 1/1. Functionally, condenses 4-methyl-5-(beta-hydroxyethyl)thiazole monophosphate (THZ-P) and 2-methyl-4-amino-5-hydroxymethyl pyrimidine pyrophosphate (HMP-PP) to form thiamine monophosphate (TMP). The protein is Thiamine-phosphate synthase of Arthrobacter sp. (strain FB24).